Consider the following 208-residue polypeptide: FMN-dependent NADH:quinone oxidoreductase (208 aa).

Residues 17 to 19 (SNS), 99 to 102 (MWNL), and 143 to 146 (SRGG) each bind FMN.

Belongs to the azoreductase type 1 family. In terms of assembly, homodimer. FMN serves as cofactor.

The catalysed reaction is 2 a quinone + NADH + H(+) = 2 a 1,4-benzosemiquinone + NAD(+). The enzyme catalyses N,N-dimethyl-1,4-phenylenediamine + anthranilate + 2 NAD(+) = 2-(4-dimethylaminophenyl)diazenylbenzoate + 2 NADH + 2 H(+). Its function is as follows. Quinone reductase that provides resistance to thiol-specific stress caused by electrophilic quinones. In terms of biological role, also exhibits azoreductase activity. Catalyzes the reductive cleavage of the azo bond in aromatic azo compounds to the corresponding amines. The chain is FMN-dependent NADH:quinone oxidoreductase from Staphylococcus aureus (strain MSSA476).